The sequence spans 87 residues: Tan_10cys (87 aa).

The first 21 residues, 1–21 (MNLKVLFLLAMVLVTLCLGED), serve as a signal peptide directing secretion. A propeptide spanning residues 22-27 (RVTDRR) is cleaved from the precursor.

This sequence belongs to the teretoxin C (TC) superfamily. Post-translationally, contains 5 disulfide bonds. Expressed by the venom duct.

The protein localises to the secreted. The sequence is that of Tan_10cys from Terebra anilis (Auger snail).